Consider the following 500-residue polypeptide: Cytochrome P450 monooxygenase acrD (500 aa).

A helical transmembrane segment spans residues 13 to 32; that stretch reads PYLSGTNLVWTLLLVGYIIP. N-linked (GlcNAc...) asparagine glycosylation is found at Asn210 and Asn414. Heme is bound at residue Cys447.

The protein belongs to the cytochrome P450 family. Heme serves as cofactor.

The protein resides in the membrane. Its pathway is secondary metabolite biosynthesis. Its function is as follows. Cytochrome P450 monooxygenase; part of the cluster that mediates the biosynthesis of acurin A, a highly reduced polyketide coupled to a serine via a peptide bond. The activities of the highly reducing polyketide synthase acrA and the nonribosomal peptide synthetase acrB are collectively responsible for the synthesis of the acurin A core structure with a heptaketide backbone produced by acrA covalently fused to a L-serine by acrB. After the formation of the PK-NRP hybrid product, it is detached from acrB by reductive release to set up the formation of the lactam ring by aldol condensation. The hydrolyase acrC then catalyzes water loss to generate a double bond in the ring. This double bond is probably reduced, which is followed by three oxidations at C-22 to generate the carboxylic acid moiety, involving probably the FAD-binding monooxygenase acrE and the cytochrome P450 monooxygenases acrD and acrF. Finally, a last methylation step performed by the O-methyltransferase acrG leads to the production of acurin A. This chain is Cytochrome P450 monooxygenase acrD, found in Aspergillus aculeatus (strain ATCC 16872 / CBS 172.66 / WB 5094).